A 344-amino-acid polypeptide reads, in one-letter code: Dihydroorotase (344 aa).

The Zn(2+) site is built by histidine 13 and histidine 15. Substrate-binding positions include 15–17 (HLR) and asparagine 41. Zn(2+) is bound by residues lysine 98, histidine 135, and histidine 173. Lysine 98 is subject to N6-carboxylysine. Substrate is bound at residue histidine 135. Substrate is bound at residue leucine 218. Position 247 (aspartate 247) interacts with Zn(2+). Residue aspartate 247 is part of the active site. Residues histidine 251 and alanine 263 each coordinate substrate.

Belongs to the metallo-dependent hydrolases superfamily. DHOase family. Class II DHOase subfamily. In terms of assembly, homodimer. Zn(2+) serves as cofactor.

The enzyme catalyses (S)-dihydroorotate + H2O = N-carbamoyl-L-aspartate + H(+). Its pathway is pyrimidine metabolism; UMP biosynthesis via de novo pathway; (S)-dihydroorotate from bicarbonate: step 3/3. Its function is as follows. Catalyzes the reversible cyclization of carbamoyl aspartate to dihydroorotate. In Neisseria meningitidis serogroup B (strain ATCC BAA-335 / MC58), this protein is Dihydroorotase.